Consider the following 116-residue polypeptide: Ino eighty subunit 4 (116 aa).

Over residues 1–15 (MSQESSVLSESQEQL) the composition is skewed to low complexity. Disordered regions lie at residues 1-40 (MSQE…PVLP) and 70-116 (EERQ…GLDS). Residues 84-108 (KGSDDKATRKKEPADEDPEVKQLEK) are compositionally biased toward basic and acidic residues.

In terms of assembly, component of the chromatin-remodeling INO80 complex, at least composed of ARP4, ARP5, ARP8, RVB1, RVB2, TAF14, NHP10, IES1, IES3, IES4, IES6, ACT1, IES2, IES5 and INO80.

The protein resides in the nucleus. The chain is Ino eighty subunit 4 (IES4) from Saccharomyces cerevisiae (strain ATCC 204508 / S288c) (Baker's yeast).